We begin with the raw amino-acid sequence, 151 residues long: MKVIFIKDMKGKGKRGEVKNVPDGYAQNFLIKNGYAKEATSSNLNTLKRVQKAEKDAYEAEKAAAEDIKKKLEDDKTIVNFKSKAGTDSRLFGSISSKKIVEGLEKQYGIKVDKRKLELPEPIKSLGYTNVPVKLFKGVEAVIRVHITEQD.

Belongs to the bacterial ribosomal protein bL9 family.

Its function is as follows. Binds to the 23S rRNA. In Lactobacillus johnsonii (strain CNCM I-12250 / La1 / NCC 533), this protein is Large ribosomal subunit protein bL9.